We begin with the raw amino-acid sequence, 456 residues long: Multidrug resistance protein NorM (456 aa).

12 consecutive transmembrane segments (helical) span residues 11-31 (LIKL…MGFV), 53-73 (IWLP…PVVA), 92-112 (VVLA…TQFI), 126-146 (TVGY…FQTL), 159-179 (AMVI…IFVY), 189-209 (GVGC…LLLA), 242-262 (FPVA…ALLV), 268-288 (IIVA…MLPM), 314-334 (SRVG…ITVL), 356-376 (LLLF…AAGA), 385-405 (AIFN…GYIL), and 417-437 (AQGF…MLGV).

Belongs to the multi antimicrobial extrusion (MATE) (TC 2.A.66.1) family.

It is found in the cell inner membrane. Multidrug efflux pump that functions as a Na(+)/drug antiporter. Confers resistance to several drugs, such as norfloxacin, ciprofloxacin, ethidium, kanamycin and streptomycin. This chain is Multidrug resistance protein NorM (norM), found in Vibrio parahaemolyticus serotype O3:K6 (strain RIMD 2210633).